A 55-amino-acid chain; its full sequence is Ferredoxin (55 aa).

4Fe-4S ferredoxin-type domains lie at 2–27 and 28–55; these read YKIT…SESD and AVRV…IVEG. Residues Cys8, Cys11, Cys14, Cys18, Cys37, Cys40, Cys43, and Cys47 each coordinate [4Fe-4S] cluster.

[4Fe-4S] cluster is required as a cofactor.

In terms of biological role, ferredoxins are iron-sulfur proteins that transfer electrons in a wide variety of metabolic reactions. The chain is Ferredoxin from Clostridium sp. (strain M-E).